The sequence spans 217 residues: GTP cyclohydrolase 1 (217 aa).

Zn(2+) contacts are provided by Cys-108, His-111, and Cys-179.

This sequence belongs to the GTP cyclohydrolase I family. Toroid-shaped homodecamer, composed of two pentamers of five dimers.

It carries out the reaction GTP + H2O = 7,8-dihydroneopterin 3'-triphosphate + formate + H(+). It participates in cofactor biosynthesis; 7,8-dihydroneopterin triphosphate biosynthesis; 7,8-dihydroneopterin triphosphate from GTP: step 1/1. This is GTP cyclohydrolase 1 from Shewanella denitrificans (strain OS217 / ATCC BAA-1090 / DSM 15013).